The chain runs to 495 residues: Cobyric acid synthase (495 aa).

The GATase cobBQ-type domain occupies Lys-249 to Ala-442. Catalysis depends on Cys-330, which acts as the Nucleophile. The active site involves His-434.

It belongs to the CobB/CobQ family. CobQ subfamily.

The protein operates within cofactor biosynthesis; adenosylcobalamin biosynthesis. Functionally, catalyzes amidations at positions B, D, E, and G on adenosylcobyrinic A,C-diamide. NH(2) groups are provided by glutamine, and one molecule of ATP is hydrogenolyzed for each amidation. This chain is Cobyric acid synthase, found in Aliivibrio fischeri (strain ATCC 700601 / ES114) (Vibrio fischeri).